A 291-amino-acid polypeptide reads, in one-letter code: Probable peptide ABC transporter permease protein y4tQ (291 aa).

5 helical membrane-spanning segments follow: residues 28 to 48 (LVLL…AAPL), 92 to 112 (LIVG…IGVI), 137 to 157 (LLAI…IVAI), 213 to 233 (ATVC…GVGV), and 249 to 269 (LFLA…AVTV). Residues 88–276 (ARISLIVGLL…VTVLAVNLLG (189 aa)) form the ABC transmembrane type-1 domain.

Belongs to the binding-protein-dependent transport system permease family. OppBC subfamily.

The protein resides in the cell inner membrane. Functionally, probably part of the binding-protein-dependent transport system y4tOPQRS for a peptide. Probably responsible for the translocation of the substrate across the membrane. The polypeptide is Probable peptide ABC transporter permease protein y4tQ (Sinorhizobium fredii (strain NBRC 101917 / NGR234)).